A 90-amino-acid chain; its full sequence is Probable two-component-system connector protein YmgA (90 aa).

Residues 63–80 (SDSGGPNRRTATADNKSM) are compositionally biased toward polar residues. The interval 63–90 (SDSGGPNRRTATADNKSMFNGKKINRIH) is disordered.

Probably a connector protein for RcsB/C regulation of biofilm formation, providing additional signal input into the two-component signaling pathway. May serve to stimulate biofilm maturation, probably via the Rcs phosphorelay. Mild overexpression at 16 degrees Celsius increases the production of colanic acid, an exopolysaccharide and matrix component, and reduces adhesive curli fimbriae expression. Both of these effects require RcsB. The sequence is that of Probable two-component-system connector protein YmgA (ymgA) from Escherichia coli (strain K12).